We begin with the raw amino-acid sequence, 625 residues long: Grainyhead-like protein 2 homolog (625 aa).

The interval 1-93 (MSQESDNNKR…KASDSQEDQD (93 aa)) is transcription activation. Disordered regions lie at residues 198–222 (ASHS…SFKD) and 428–452 (EERK…SSDG). Residues 244 to 482 (GSGTFQYTLE…DLHSQPVLFI (239 aa)) form the Grh/CP2 DB domain. Polar residues predominate over residues 440–451 (QASQAQCNNSSD).

The protein belongs to the grh/CP2 family. Grainyhead subfamily. In terms of assembly, homodimer, also forms heterodimers with GRHL1 or GRHL3.

The protein localises to the nucleus. It is found in the membrane. In terms of biological role, transcription factor playing an important role in primary neurulation and in epithelial development. Binds directly to the consensus DNA sequence 5'-AACCGGTT-3' acting as an activator and repressor on distinct target genes. During embryogenesis, plays unique and cooperative roles with GRHL3 in establishing distinct zones of primary neurulation. Essential for closure 3 (rostral end of the forebrain), functions cooperatively with GRHL3 in closure 2 (forebrain/midbrain boundary) and posterior neuropore closure. Regulates epithelial morphogenesis acting as a target gene-associated transcriptional activator of apical junctional complex components. Up-regulates of CLDN3 and CLDN4, as well as of RAB25, which increases the CLDN4 protein and its localization at tight junctions. Comprises an essential component of the transcriptional machinery that establishes appropriate expression levels of CLDN4 and CDH1 in different types of epithelia. Exhibits functional redundancy with GRHL3 in epidermal morphogenetic events such as eyelid fusion and epidermal wound repair. In lung, forms a regulatory loop with NKX2-1 that coordinates lung epithelial cell morphogenesis and differentiation. In keratinocytes, plays a role in telomerase activation during cellular proliferation, regulates TERT expression by binding to TERT promoter region and inhibiting DNA methylation at the 5'-CpG island, possibly by interfering with DNMT1 enzyme activity. In addition, impairs keratinocyte differentiation and epidermal function by inhibiting the expression of genes clustered at the epidermal differentiation complex (EDC) as well as GRHL1 and GRHL3 through epigenetic mechanisms. The protein is Grainyhead-like protein 2 homolog (Grhl2) of Mus musculus (Mouse).